A 297-amino-acid chain; its full sequence is HTH-type transcriptional regulator ArgP (297 aa).

One can recognise an HTH lysR-type domain in the interval 4 to 60 (PDYRTLQALDAVIRERGFERAAQKLCITQSAVSQRIKQLENMFGQPLLVRTVPPRPT). The H-T-H motif DNA-binding region spans 21 to 40 (FERAAQKLCITQSAVSQRIK).

The protein belongs to the LysR transcriptional regulatory family. In terms of assembly, homodimer.

Controls the transcription of genes involved in arginine and lysine metabolism. The sequence is that of HTH-type transcriptional regulator ArgP from Salmonella arizonae (strain ATCC BAA-731 / CDC346-86 / RSK2980).